Reading from the N-terminus, the 1256-residue chain is Cohesin subunit SA-3 (1256 aa).

Over residues 1–22 (MPTLWSPSTQHHGSSSGSMSSP) the composition is skewed to low complexity. The interval 1–110 (MPTLWSPSTQ…GGNDKNKSVP (110 aa)) is disordered. Positions 72–83 (RNVRKRAAKRPP) are enriched in basic residues. Residues 324 to 409 (FVHRYRDILP…NRFKDRMVSM (86 aa)) form the SCD domain. 2 disordered regions span residues 1096–1169 (RRLQ…GPEL) and 1230–1256 (KLLH…MEDF). Over residues 1113 to 1125 (NSGPTTPTLTSTA) the composition is skewed to polar residues. Residues 1126–1140 (VKRRQSPRTVGKRQK) show a composition bias toward basic residues. Pro residues predominate over residues 1144–1166 (GPGPGPGPGPGPGPGPGPGPGPG). A Phosphoserine modification is found at Ser-1234.

Belongs to the SCC3 family. Component of the meiosis-specific cohesin complex, which also contains the SMC1 (SMC1A or SMC1B) and SMC3 heterodimer. Such complex likely contains RAD21, or the meiosis-specific related protein REC8. Interacts with CCDC79/TERB1; recruiting cohesin to telomeres to develop structural rigidity. Post-translationally, phosphorylated. As to expression, testis specific.

It localises to the nucleus. The protein localises to the chromosome. Functionally, meiosis specific component of cohesin complex. The cohesin complex is required for the cohesion of sister chromatids after DNA replication. The cohesin complex apparently forms a large proteinaceous ring within which sister chromatids can be trapped. At anaphase, the complex is cleaved and dissociates from chromatin, allowing sister chromatids to segregate. The meiosis-specific cohesin complex probably replaces mitosis specific cohesin complex when it dissociates from chromatin during prophase I. The protein is Cohesin subunit SA-3 (Stag3) of Rattus norvegicus (Rat).